Here is a 780-residue protein sequence, read N- to C-terminus: Pumilio domain-containing protein C4G8.03c (780 aa).

3 disordered regions span residues M1 to Y29, L298 to K330, and N358 to V411. Residues L298 to P307 show a composition bias toward basic and acidic residues. The span at P311 to L322 shows a compositional bias: low complexity. Residues N358–V382 are compositionally biased toward polar residues. The PUM-HD domain maps to E435 to T778. 9 Pumilio repeats span residues G462–P497, E498–N533, G534–L569, K570–L606, S607–N642, S643–E678, K679–Q714, E715–R752, and S753–S780.

In Schizosaccharomyces pombe (strain 972 / ATCC 24843) (Fission yeast), this protein is Pumilio domain-containing protein C4G8.03c.